Here is a 286-residue protein sequence, read N- to C-terminus: Polyamine aminopropyltransferase (286 aa).

Positions 3–240 (DLWYSESHAD…GHWLFGFASK (238 aa)) constitute a PABS domain. S-methyl-5'-thioadenosine is bound at residue Gln-32. Spermidine contacts are provided by His-63 and Asp-87. S-methyl-5'-thioadenosine is bound by residues Glu-107 and 139–140 (DG). The Proton acceptor role is filled by Asp-158. Spermidine is bound at residue 158 to 161 (DSTD). Residue Pro-165 coordinates S-methyl-5'-thioadenosine.

This sequence belongs to the spermidine/spermine synthase family. In terms of assembly, homodimer or homotetramer.

Its subcellular location is the cytoplasm. It catalyses the reaction S-adenosyl 3-(methylsulfanyl)propylamine + putrescine = S-methyl-5'-thioadenosine + spermidine + H(+). It functions in the pathway amine and polyamine biosynthesis; spermidine biosynthesis; spermidine from putrescine: step 1/1. Catalyzes the irreversible transfer of a propylamine group from the amino donor S-adenosylmethioninamine (decarboxy-AdoMet) to putrescine (1,4-diaminobutane) to yield spermidine. The sequence is that of Polyamine aminopropyltransferase from Clostridium acetobutylicum (strain ATCC 824 / DSM 792 / JCM 1419 / IAM 19013 / LMG 5710 / NBRC 13948 / NRRL B-527 / VKM B-1787 / 2291 / W).